A 669-amino-acid chain; its full sequence is uncharacterized protein (669 aa).

Helical transmembrane passes span 39-61 (LCPLLVALAILFSLTAVSSGTSW), 124-146 (ISLWGISLGPTAGTLLVGVLISI), 153-175 (GIIYGIPSIVSTIFLLMFMYALG), 190-212 (GLAFIVIGLIVWSLNWLICFFGV), 221-243 (FAPGIISGSYTITAIIGVAQTAL), and 263-285 (IAAGYAISYVLSNIGIILLIRYL). RCK C-terminal domains lie at 316–397 (AGSL…KLIG) and 398–483 (KESD…LGGR). The next 5 helical transmembrane spans lie at 484-506 (PILNSSITEVMYMAIAMGIGYIF), 516-538 (IPFALGTSAGCLLAGIFMSYWRS), 558-580 (IGLNLFVAVLAAAVGPKIIESFH), 585-607 (IWVAIIGILGALVPPLVAFVVGI), and 645-667 (VPYPLTYALTTVLALVGGYFAML).

Belongs to the AAE transporter (TC 2.A.81) family.

The protein resides in the cell membrane. This is an uncharacterized protein from Desulfotalea psychrophila (strain LSv54 / DSM 12343).